Reading from the N-terminus, the 686-residue chain is LEAF RUST 10 DISEASE-RESISTANCE LOCUS RECEPTOR-LIKE PROTEIN KINASE-like 1.3 (686 aa).

Positions 1–33 (MFSPVLFRFSKPNSFLVLLFFLSYIHFLPCAQS) are cleaved as a signal peptide. Over 34–264 (QREPCDTLFR…AGLSKKGKIG (231 aa)) the chain is Extracellular. 5 N-linked (GlcNAc...) asparagine glycosylation sites follow: Asn-76, Asn-93, Asn-175, Asn-190, and Asn-236. Residues 265 to 285 (IGFASGFLGATLIGGCLLCIF) traverse the membrane as a helical segment. Over 286 to 686 (IRRRKKLATQ…SSSNTTASSF (401 aa)) the chain is Cytoplasmic. The 276-residue stretch at 358-633 (ENFSKELGDG…DEIVEVLRVI (276 aa)) folds into the Protein kinase domain. ATP-binding positions include 364-372 (LGDGGFGTV) and Lys-386. Tyr-432 carries the post-translational modification Phosphotyrosine. Residue Asp-482 is the Proton acceptor of the active site. The residue at position 515 (Ser-515) is a Phosphoserine. 2 positions are modified to phosphothreonine: Thr-516 and Thr-521. At Tyr-529 the chain carries Phosphotyrosine. The tract at residues 657–686 (GLLKHGVPPPLSPETDKTTASSSNTTASSF) is disordered. Positions 674–686 (TTASSSNTTASSF) are enriched in low complexity.

It belongs to the protein kinase superfamily. Ser/Thr protein kinase family.

The protein localises to the cell membrane. The catalysed reaction is L-seryl-[protein] + ATP = O-phospho-L-seryl-[protein] + ADP + H(+). The enzyme catalyses L-threonyl-[protein] + ATP = O-phospho-L-threonyl-[protein] + ADP + H(+). This Arabidopsis thaliana (Mouse-ear cress) protein is LEAF RUST 10 DISEASE-RESISTANCE LOCUS RECEPTOR-LIKE PROTEIN KINASE-like 1.3.